The following is a 502-amino-acid chain: Protein MGF 505-5R (502 aa).

The protein belongs to the asfivirus MGF 505 family.

Functionally, plays a role in virus cell tropism, and may be required for efficient virus replication in macrophages. This chain is Protein MGF 505-5R, found in Ornithodoros (relapsing fever ticks).